The primary structure comprises 330 residues: Fructose-1,6-bisphosphatase class 1 (330 aa).

Residues Glu-78, Asp-97, Leu-99, and Asp-100 each contribute to the Mg(2+) site. Substrate-binding positions include 100-103 (DGSS) and Asn-188. Residue Glu-260 coordinates Mg(2+).

The protein belongs to the FBPase class 1 family. As to quaternary structure, homotetramer. Mg(2+) is required as a cofactor.

Its subcellular location is the cytoplasm. The enzyme catalyses beta-D-fructose 1,6-bisphosphate + H2O = beta-D-fructose 6-phosphate + phosphate. The protein operates within carbohydrate biosynthesis; gluconeogenesis. The protein is Fructose-1,6-bisphosphatase class 1 of Paracoccus denitrificans (strain Pd 1222).